The following is a 356-amino-acid chain: Sporulation minus regulator 1 (356 aa).

The DNA-binding element occupies 183 to 199 (HPLRQLPGNPWHKFFGN).

To N.crassa mta-2.

The protein resides in the nucleus. Functionally, transcriptional activator that is required for post-fertilization events. It is required for the developmental events that occur in the female organ after fertilization. This chain is Sporulation minus regulator 1 (SMR1), found in Podospora anserina (Pleurage anserina).